We begin with the raw amino-acid sequence, 718 residues long: Acetolactate synthase, mitochondrial (718 aa).

2 disordered regions span residues 1 to 53 (MLTR…YDTP) and 75 to 99 (QSSA…QAAP). The segment covering 32 to 45 (RYSNNIHTSSTQNA) has biased composition (polar residues). Over residues 76–99 (SSASTAAASPAVRPQPAQHFQAAP) the composition is skewed to low complexity. Position 173 (Glu173) interacts with thiamine diphosphate. Arg275 contributes to the FAD binding site. The interval 301–326 (VQPGHSPYLPSNPLNPSSQPSDPLPG) is disordered. A compositionally biased stretch (low complexity) spans 306 to 325 (SPYLPSNPLNPSSQPSDPLP). FAD contacts are provided by residues 397–418 (HGSA…LGVR) and 449–468 (EIQP…VLGD). The interval 541–621 (QHQMWACQYY…VKVLLFNNEF (81 aa)) is thiamine pyrophosphate binding. The Mg(2+) site is built by Asp592 and Asn619.

Belongs to the TPP enzyme family. Mg(2+) serves as cofactor. Requires thiamine diphosphate as cofactor.

The protein resides in the mitochondrion. The catalysed reaction is 2 pyruvate + H(+) = (2S)-2-acetolactate + CO2. It participates in amino-acid biosynthesis; L-isoleucine biosynthesis; L-isoleucine from 2-oxobutanoate: step 1/4. It functions in the pathway amino-acid biosynthesis; L-valine biosynthesis; L-valine from pyruvate: step 1/4. The protein is Acetolactate synthase, mitochondrial (ILV2) of Cryptococcus neoformans var. grubii serotype A (strain H99 / ATCC 208821 / CBS 10515 / FGSC 9487) (Filobasidiella neoformans var. grubii).